Consider the following 257-residue polypeptide: Phycoerythrobilin:ferredoxin oxidoreductase (257 aa).

It belongs to the HY2 family.

The enzyme catalyses (3Z)-phycoerythrobilin + oxidized 2[4Fe-4S]-[ferredoxin] = 15,16-dihydrobiliverdin + reduced 2[4Fe-4S]-[ferredoxin] + 2 H(+). Functionally, catalyzes the two-electron reduction of the C2 and C3(1) diene system of 15,16-dihydrobiliverdin. The chain is Phycoerythrobilin:ferredoxin oxidoreductase from Synechococcus sp. (strain CC9902).